The following is a 546-amino-acid chain: Probable protein kinase UbiB (546 aa).

The 379-residue stretch at 124–502 folds into the Protein kinase domain; that stretch reads DFDITPLASA…RVKQGQSRYL (379 aa). Residues 130-138 and Lys-153 contribute to the ATP site; that span reads LASASIAQV. Residue Asp-288 is the Proton acceptor of the active site. The next 2 membrane-spanning stretches (helical) occupy residues 501–518 and 523–542; these read YLFG…LLFI and WGMS…LIGW.

Belongs to the ABC1 family. UbiB subfamily.

It is found in the cell inner membrane. It participates in cofactor biosynthesis; ubiquinone biosynthesis [regulation]. Its function is as follows. Is probably a protein kinase regulator of UbiI activity which is involved in aerobic coenzyme Q (ubiquinone) biosynthesis. The chain is Probable protein kinase UbiB from Cronobacter sakazakii (strain ATCC BAA-894) (Enterobacter sakazakii).